An 80-amino-acid chain; its full sequence is SPbeta prophage-derived uncharacterized HTH-type transcriptional regulator YotL (80 aa).

Positions 12-67 (LNELMHEYSVSIEDLVECTGLSKQRINDYVGGFKSNMNIGTAMTFADAIGCSIEEL) constitute an HTH cro/C1-type domain. Positions 23-42 (IEDLVECTGLSKQRINDYVG) form a DNA-binding region, H-T-H motif.

In Bacillus subtilis (strain 168), this protein is SPbeta prophage-derived uncharacterized HTH-type transcriptional regulator YotL (yotL).